Here is a 20-residue protein sequence, read N- to C-terminus: Fibrinogen beta chain (20 aa).

A disordered region spans residues 1–20; it reads ATDYEDEEFPGAVPPSVGAR. T2 is a glycosylation site (O-linked (GalNAc...) threonine). Y4 is modified (sulfotyrosine).

As to quaternary structure, heterohexamer; disulfide linked. Contains 2 sets of 3 non-identical chains (alpha, beta and gamma). The 2 heterotrimers are in head to head conformation with the N-termini in a small central domain. In terms of processing, conversion of fibrinogen to fibrin is triggered by thrombin, which cleaves fibrinopeptides A and B from alpha and beta chains, and thus exposes the N-terminal polymerization sites responsible for the formation of the soft clot.

The protein localises to the secreted. In terms of biological role, cleaved by the protease thrombin to yield monomers which, together with fibrinogen alpha (FGA) and fibrinogen gamma (FGG), polymerize to form an insoluble fibrin matrix. Fibrin has a major function in hemostasis as one of the primary components of blood clots. In addition, functions during the early stages of wound repair to stabilize the lesion and guide cell migration during re-epithelialization. Was originally thought to be essential for platelet aggregation, based on in vitro studies using anticoagulated blood. However subsequent studies have shown that it is not absolutely required for thrombus formation in vivo. Enhances expression of SELP in activated platelets. Maternal fibrinogen is essential for successful pregnancy. Fibrin deposition is also associated with infection, where it protects against IFNG-mediated hemorrhage. May also facilitate the antibacterial immune response via both innate and T-cell mediated pathways. The chain is Fibrinogen beta chain (FGB) from Elephas maximus (Indian elephant).